The chain runs to 205 residues: Shieldin complex subunit 1 (205 aa).

In terms of assembly, component of the shieldin complex, consisting of SHLD1, SHLD2, SHLD3 and MAD2L2/REV7. Within the complex, SHLD2 forms a scaffold which interacts with a SHLD3-MAD2L2 subcomplex via its N-terminus, and with SHLD1 via its C-terminus. Interacts with ASTE1.

Its subcellular location is the chromosome. In terms of biological role, component of the shieldin complex, which plays an important role in repair of DNA double-stranded breaks (DSBs). During G1 and S phase of the cell cycle, the complex functions downstream of TP53BP1 to promote non-homologous end joining (NHEJ) and suppress DNA end resection. Mediates various NHEJ-dependent processes including immunoglobulin class-switch recombination, and fusion of unprotected telomeres. The chain is Shieldin complex subunit 1 from Homo sapiens (Human).